Reading from the N-terminus, the 573-residue chain is Isocitrate dehydrogenase kinase/phosphatase (573 aa).

ATP-binding positions include 317-323 (APGVRGM) and lysine 338. The active site involves aspartate 373.

The protein belongs to the AceK family.

It is found in the cytoplasm. It carries out the reaction L-seryl-[isocitrate dehydrogenase] + ATP = O-phospho-L-seryl-[isocitrate dehydrogenase] + ADP + H(+). In terms of biological role, bifunctional enzyme which can phosphorylate or dephosphorylate isocitrate dehydrogenase (IDH) on a specific serine residue. This is a regulatory mechanism which enables bacteria to bypass the Krebs cycle via the glyoxylate shunt in response to the source of carbon. When bacteria are grown on glucose, IDH is fully active and unphosphorylated, but when grown on acetate or ethanol, the activity of IDH declines drastically concomitant with its phosphorylation. This is Isocitrate dehydrogenase kinase/phosphatase from Pseudomonas fluorescens (strain Pf0-1).